A 993-amino-acid chain; its full sequence is Protein translocase subunit SecA (993 aa).

ATP contacts are provided by residues Q102, 120–124 (GEGKT), and D523. The disordered stretch occupies residues 910-962 (ENAPEPQISGGNGQQPPQRRQQTSLDDLEKQFERKKKRELEQARMAGGGMPDA). The span at 936-951 (DLEKQFERKKKRELEQ) shows a compositional bias: basic and acidic residues. 4 residues coordinate Zn(2+): C979, C981, C990, and H991.

The protein belongs to the SecA family. Monomer and homodimer. Part of the essential Sec protein translocation apparatus which comprises SecA, SecYEG and auxiliary proteins SecDF. Other proteins may also be involved. The cofactor is Zn(2+).

The protein resides in the cell inner membrane. It is found in the cytoplasm. It carries out the reaction ATP + H2O + cellular proteinSide 1 = ADP + phosphate + cellular proteinSide 2.. Its function is as follows. Part of the Sec protein translocase complex. Interacts with the SecYEG preprotein conducting channel. Has a central role in coupling the hydrolysis of ATP to the transfer of proteins into and across the cell membrane, serving as an ATP-driven molecular motor driving the stepwise translocation of polypeptide chains across the membrane. The sequence is that of Protein translocase subunit SecA from Koribacter versatilis (strain Ellin345).